A 1056-amino-acid chain; its full sequence is Carbamoyl phosphate synthase large chain (1056 aa).

The carboxyphosphate synthetic domain stretch occupies residues 1 to 401 (MPKRTDIHKI…ALHKAVRSLE (401 aa)). Residues R129, R169, G175, G176, K208, I210, E215, G241, I242, H243, Q284, and E298 each coordinate ATP. The ATP-grasp 1 domain maps to 133 to 327 (KELMNELGEP…IAKMAAKIAV (195 aa)). 3 residues coordinate Mg(2+): Q284, E298, and N300. Mn(2+)-binding residues include Q284, E298, and N300. An oligomerization domain region spans residues 402–546 (IDEKDLFSAE…YSAYDHENES (145 aa)). A carbamoyl phosphate synthetic domain region spans residues 547–929 (QRTKKPSILV…ALHKAFSGAH (383 aa)). In terms of domain architecture, ATP-grasp 2 spans 671-861 (DQVITDLNLK…MAQVATRVIL (191 aa)). Residues R707, A746, L748, E752, G777, V778, H779, S780, Q820, and E832 each contribute to the ATP site. Residues Q820, E832, and N834 each coordinate Mg(2+). 3 residues coordinate Mn(2+): Q820, E832, and N834. One can recognise an MGS-like domain in the interval 930 to 1056 (IQVPNDGKIL…DQSLEAITIK (127 aa)). The allosteric domain stretch occupies residues 930-1056 (IQVPNDGKIL…DQSLEAITIK (127 aa)).

Belongs to the CarB family. As to quaternary structure, composed of two chains; the small (or glutamine) chain promotes the hydrolysis of glutamine to ammonia, which is used by the large (or ammonia) chain to synthesize carbamoyl phosphate. Tetramer of heterodimers (alpha,beta)4. Mg(2+) is required as a cofactor. Requires Mn(2+) as cofactor.

The enzyme catalyses hydrogencarbonate + L-glutamine + 2 ATP + H2O = carbamoyl phosphate + L-glutamate + 2 ADP + phosphate + 2 H(+). It carries out the reaction hydrogencarbonate + NH4(+) + 2 ATP = carbamoyl phosphate + 2 ADP + phosphate + 2 H(+). The protein operates within amino-acid biosynthesis; L-arginine biosynthesis; carbamoyl phosphate from bicarbonate: step 1/1. It functions in the pathway pyrimidine metabolism; UMP biosynthesis via de novo pathway; (S)-dihydroorotate from bicarbonate: step 1/3. Its function is as follows. Large subunit of the glutamine-dependent carbamoyl phosphate synthetase (CPSase). CPSase catalyzes the formation of carbamoyl phosphate from the ammonia moiety of glutamine, carbonate, and phosphate donated by ATP, constituting the first step of 2 biosynthetic pathways, one leading to arginine and/or urea and the other to pyrimidine nucleotides. The large subunit (synthetase) binds the substrates ammonia (free or transferred from glutamine from the small subunit), hydrogencarbonate and ATP and carries out an ATP-coupled ligase reaction, activating hydrogencarbonate by forming carboxy phosphate which reacts with ammonia to form carbamoyl phosphate. The sequence is that of Carbamoyl phosphate synthase large chain from Limosilactobacillus reuteri (strain DSM 20016) (Lactobacillus reuteri).